Consider the following 233-residue polypeptide: Ribonuclease 3 (233 aa).

The region spanning 9–136 (LQHFWEQFHL…IIGSVYLSGG (128 aa)) is the RNase III domain. E49 contacts Mg(2+). D53 is an active-site residue. Residues D122 and E125 each contribute to the Mg(2+) site. Residue E125 is part of the active site. The region spanning 162–231 (DSKSALQEFV…ARAALALLKV (70 aa)) is the DRBM domain.

It belongs to the ribonuclease III family. In terms of assembly, homodimer. It depends on Mg(2+) as a cofactor.

The protein resides in the cytoplasm. It catalyses the reaction Endonucleolytic cleavage to 5'-phosphomonoester.. In terms of biological role, digests double-stranded RNA. Involved in the processing of primary rRNA transcript to yield the immediate precursors to the large and small rRNAs (23S and 16S). Processes some mRNAs, and tRNAs when they are encoded in the rRNA operon. Processes pre-crRNA and tracrRNA of type II CRISPR loci if present in the organism. The polypeptide is Ribonuclease 3 (Moorella thermoacetica (strain ATCC 39073 / JCM 9320)).